We begin with the raw amino-acid sequence, 326 residues long: Protein FAM110C (326 aa).

3 disordered regions span residues 1-37, 51-80, and 201-221; these read MRAL…KSAV, TLGS…PSTL, and VELR…LSSR. The span at 209–221 shows a compositional bias: polar residues; sequence KGLQRSQSDLSSR. The residue at position 255 (Ser-255) is a Phosphoserine.

This sequence belongs to the FAM110 family. In terms of assembly, interacts with AKT1; the interaction is transient and follows AKT1 activation. Interacts with PPP2CA and alpha-tubulin.

The protein localises to the cytoplasm. The protein resides in the cytoskeleton. Its subcellular location is the microtubule organizing center. It localises to the centrosome. It is found in the spindle pole. The protein localises to the nucleus. Functionally, may play a role in microtubule organization. May play a role in cell spreading and cell migration of epithelial cells; the function may involve the AKT1 signaling pathway. The polypeptide is Protein FAM110C (Fam110c) (Rattus norvegicus (Rat)).